A 412-amino-acid polypeptide reads, in one-letter code: Inositol polyphosphate-5-phosphatase A (412 aa).

Cysteine 409 is lipidated: S-farnesyl cysteine. Positions 410 to 412 (VVQ) are cleaved as a propeptide — removed in mature form.

The protein belongs to the inositol 1,4,5-trisphosphate 5-phosphatase type I family. As to quaternary structure, interacts with TASOR. Isoprenylation at Cys-409 is required for localization at the membrane. In terms of tissue distribution, predominantly expressed in heart, brain, and skeletal muscle. In brain; high level in Purkinje cells.

Its subcellular location is the cell membrane. The protein resides in the cell projection. It localises to the dendrite. It carries out the reaction 1D-myo-inositol 1,4,5-trisphosphate + H2O = 1D-myo-inositol 1,4-bisphosphate + phosphate. The catalysed reaction is 1D-myo-inositol 1,3,4,5-tetrakisphosphate + H2O = 1D-myo-inositol 1,3,4-trisphosphate + phosphate. Functionally, phosphatase that specifically hydrolyzes the 5-phosphate of inositol 1,4,5-trisphosphate to inositol 1,4-bisphosphate, and inositol 1,3,4,5-tetrasphosphate to inositol 1,3,4-trisphosphate. Plays a crucial role in the survival of cerebellar Purkinje cells. The protein is Inositol polyphosphate-5-phosphatase A of Homo sapiens (Human).